Consider the following 78-residue polypeptide: UPF0248 protein Msed_0897 (78 aa).

This sequence belongs to the UPF0248 family.

In Metallosphaera sedula (strain ATCC 51363 / DSM 5348 / JCM 9185 / NBRC 15509 / TH2), this protein is UPF0248 protein Msed_0897.